The primary structure comprises 212 residues: NAD(P)H-hydrate epimerase (212 aa).

The 202-residue stretch at 11–212 (MRHYDFYTIN…ANDMGTYAVD (202 aa)) folds into the YjeF N-terminal domain. 60–64 (NNGGD) is a (6S)-NADPHX binding site. 2 residues coordinate K(+): Asn-61 and Asp-123. (6S)-NADPHX contacts are provided by residues 127–133 (GIGIDRA), Tyr-138, and Asp-156. Ser-159 provides a ligand contact to K(+).

The protein belongs to the NnrE/AIBP family. K(+) serves as cofactor.

The enzyme catalyses (6R)-NADHX = (6S)-NADHX. It carries out the reaction (6R)-NADPHX = (6S)-NADPHX. Catalyzes the epimerization of the S- and R-forms of NAD(P)HX, a damaged form of NAD(P)H that is a result of enzymatic or heat-dependent hydration. This is a prerequisite for the S-specific NAD(P)H-hydrate dehydratase to allow the repair of both epimers of NAD(P)HX. This is NAD(P)H-hydrate epimerase from Limosilactobacillus reuteri (strain DSM 20016) (Lactobacillus reuteri).